We begin with the raw amino-acid sequence, 239 residues long: NADH-quinone oxidoreductase chain 2 (239 aa).

[2Fe-2S] cluster is bound by residues Cys96, Cys101, Cys137, and Cys141.

It belongs to the complex I 24 kDa subunit family. In terms of assembly, NDH-1 is composed of at least 14 different subunits, Nqo1 to Nqo14. The complex has a L-shaped structure, with the hydrophobic arm (subunits Nqo7, Nqo8, Nqo10 to Nqo14) embedded in the inner membrane and the hydrophilic peripheral arm (subunits Nqo1 to Nqo6, Nqo9) protruding into the bacterial cytoplasm. The hydrophilic domain contains all the redox centers. [2Fe-2S] cluster serves as cofactor.

The protein localises to the cell inner membrane. The enzyme catalyses a quinone + NADH + 5 H(+)(in) = a quinol + NAD(+) + 4 H(+)(out). Functionally, NDH-1 shuttles electrons from NADH, via FMN and iron-sulfur (Fe-S) centers, to quinones in the respiratory chain. The immediate electron acceptor for the enzyme in this species is believed to be ubiquinone. Couples the redox reaction to proton translocation (for every two electrons transferred, four hydrogen ions are translocated across the cytoplasmic membrane), and thus conserves the redox energy in a proton gradient. The sequence is that of NADH-quinone oxidoreductase chain 2 (nqo2) from Paracoccus denitrificans.